The primary structure comprises 448 residues: N-succinylarginine dihydrolase (448 aa).

Substrate is bound by residues 19 to 28 (AGLSSGNIAS), asparagine 110, and 137 to 138 (HR). The active site involves glutamate 174. Residue arginine 216 participates in substrate binding. The active site involves histidine 252. Aspartate 254 and asparagine 366 together coordinate substrate. Cysteine 372 functions as the Nucleophile in the catalytic mechanism.

It belongs to the succinylarginine dihydrolase family. In terms of assembly, homodimer.

The catalysed reaction is N(2)-succinyl-L-arginine + 2 H2O + 2 H(+) = N(2)-succinyl-L-ornithine + 2 NH4(+) + CO2. It participates in amino-acid degradation; L-arginine degradation via AST pathway; L-glutamate and succinate from L-arginine: step 2/5. Functionally, catalyzes the hydrolysis of N(2)-succinylarginine into N(2)-succinylornithine, ammonia and CO(2). This Legionella pneumophila (strain Corby) protein is N-succinylarginine dihydrolase.